A 102-amino-acid chain; its full sequence is NADH-quinone oxidoreductase subunit K (102 aa).

The next 3 helical transmembrane spans lie at 5–25 (LTQY…GIIL), 30–50 (IIII…NLVA), and 62–82 (IFAL…LAIL).

This sequence belongs to the complex I subunit 4L family. As to quaternary structure, NDH-1 is composed of 14 different subunits. Subunits NuoA, H, J, K, L, M, N constitute the membrane sector of the complex.

Its subcellular location is the cell inner membrane. It carries out the reaction a quinone + NADH + 5 H(+)(in) = a quinol + NAD(+) + 4 H(+)(out). In terms of biological role, NDH-1 shuttles electrons from NADH, via FMN and iron-sulfur (Fe-S) centers, to quinones in the respiratory chain. The immediate electron acceptor for the enzyme in this species is believed to be ubiquinone. Couples the redox reaction to proton translocation (for every two electrons transferred, four hydrogen ions are translocated across the cytoplasmic membrane), and thus conserves the redox energy in a proton gradient. The polypeptide is NADH-quinone oxidoreductase subunit K (Beijerinckia indica subsp. indica (strain ATCC 9039 / DSM 1715 / NCIMB 8712)).